Reading from the N-terminus, the 277-residue chain is NH(3)-dependent NAD(+) synthetase (277 aa).

36–43 (GLSGGIDS) contacts ATP. D42 contributes to the Mg(2+) binding site. R118 contacts deamido-NAD(+). T138 provides a ligand contact to ATP. Residue E143 participates in Mg(2+) binding. The ATP site is built by K167 and S189.

The protein belongs to the NAD synthetase family. As to quaternary structure, homodimer.

It carries out the reaction deamido-NAD(+) + NH4(+) + ATP = AMP + diphosphate + NAD(+) + H(+). Its pathway is cofactor biosynthesis; NAD(+) biosynthesis; NAD(+) from deamido-NAD(+) (ammonia route): step 1/1. Catalyzes the ATP-dependent amidation of deamido-NAD to form NAD. Uses ammonia as a nitrogen source. This chain is NH(3)-dependent NAD(+) synthetase, found in Chlorobaculum tepidum (strain ATCC 49652 / DSM 12025 / NBRC 103806 / TLS) (Chlorobium tepidum).